Here is a 93-residue protein sequence, read N- to C-terminus: PqqA binding protein (93 aa).

The protein belongs to the PqqD family. In terms of assembly, monomer. Interacts with PqqE.

The protein operates within cofactor biosynthesis; pyrroloquinoline quinone biosynthesis. In terms of biological role, functions as a PqqA binding protein and presents PqqA to PqqE, in the pyrroloquinoline quinone (PQQ) biosynthetic pathway. The polypeptide is PqqA binding protein (Methylococcus capsulatus (strain ATCC 33009 / NCIMB 11132 / Bath)).